The sequence spans 775 residues: 1,4-alpha-glucan branching enzyme GlgB (775 aa).

Asp-431 serves as the catalytic Nucleophile. The active-site Proton donor is the Glu-484.

This sequence belongs to the glycosyl hydrolase 13 family. GlgB subfamily. Monomer.

It catalyses the reaction Transfers a segment of a (1-&gt;4)-alpha-D-glucan chain to a primary hydroxy group in a similar glucan chain.. Its pathway is glycan biosynthesis; glycogen biosynthesis. Functionally, catalyzes the formation of the alpha-1,6-glucosidic linkages in glycogen by scission of a 1,4-alpha-linked oligosaccharide from growing alpha-1,4-glucan chains and the subsequent attachment of the oligosaccharide to the alpha-1,6 position. The chain is 1,4-alpha-glucan branching enzyme GlgB from Parasynechococcus marenigrum (strain WH8102).